The following is a 614-amino-acid chain: Asparagine synthetase [glutamine-hydrolyzing] 3 (614 aa).

C2 (for GATase activity) is an active-site residue. A Glutamine amidotransferase type-2 domain is found at 2 to 216; that stretch reads CGITGWVDFK…PAHALTFSKD (215 aa). Residues 50-54, 77-79, and D102 each bind L-glutamine; these read RLAVV and NGE. 377–378 contributes to the ATP binding site; the sequence is SG.

Belongs to the asparagine synthetase family.

It carries out the reaction L-aspartate + L-glutamine + ATP + H2O = L-asparagine + L-glutamate + AMP + diphosphate + H(+). It functions in the pathway amino-acid biosynthesis; L-asparagine biosynthesis; L-asparagine from L-aspartate (L-Gln route): step 1/1. Asparagine synthetase involved in sporulation. This chain is Asparagine synthetase [glutamine-hydrolyzing] 3 (asnO), found in Bacillus subtilis (strain 168).